A 555-amino-acid polypeptide reads, in one-letter code: Probable beta-glucosidase btgE (555 aa).

A signal peptide spans Met1–Ala18. Disordered stretches follow at residues Thr92–Pro114 and Thr263–Ala290. A compositionally biased stretch (low complexity) spans Thr263 to Thr288. Glu392 serves as the catalytic Proton donor. Glu488 acts as the Nucleophile in catalysis.

This sequence belongs to the glycosyl hydrolase 17 family.

The protein resides in the secreted. It is found in the cell wall. The enzyme catalyses Hydrolysis of terminal, non-reducing beta-D-glucosyl residues with release of beta-D-glucose.. The protein operates within glycan metabolism; cellulose degradation. Functionally, beta-glucosidases are one of a number of cellulolytic enzymes involved in the degradation of cellulosic biomass. Catalyzes the last step releasing glucose from the inhibitory cellobiose. This chain is Probable beta-glucosidase btgE (btgE), found in Emericella nidulans (strain FGSC A4 / ATCC 38163 / CBS 112.46 / NRRL 194 / M139) (Aspergillus nidulans).